A 312-amino-acid polypeptide reads, in one-letter code: 2,3-dihydroxyphenylpropionate/2,3-dihydroxicinnamic acid 1,2-dioxygenase (312 aa).

Histidine 115 serves as the catalytic Proton donor. Histidine 179 acts as the Proton acceptor in catalysis.

This sequence belongs to the LigB/MhpB extradiol dioxygenase family. In terms of assembly, homotetramer. Fe(2+) is required as a cofactor.

The enzyme catalyses 3-(2,3-dihydroxyphenyl)propanoate + O2 = (2Z,4E)-2-hydroxy-6-oxonona-2,4-dienedioate + H(+). The catalysed reaction is (2E)-3-(2,3-dihydroxyphenyl)prop-2-enoate + O2 = (2Z,4E,7E)-2-hydroxy-6-oxonona-2,4,7-trienedioate + H(+). Its pathway is aromatic compound metabolism; 3-phenylpropanoate degradation. Catalyzes the non-heme iron(II)-dependent oxidative cleavage of 2,3-dihydroxyphenylpropionic acid and 2,3-dihydroxicinnamic acid into 2-hydroxy-6-ketononadienedioate and 2-hydroxy-6-ketononatrienedioate, respectively. In Azotobacter vinelandii (strain DJ / ATCC BAA-1303), this protein is 2,3-dihydroxyphenylpropionate/2,3-dihydroxicinnamic acid 1,2-dioxygenase.